The chain runs to 610 residues: MCGIVGAVAQRDVAEILVEGLRRLEYRGYDSAGVAVVDSQSNLTRIRRLGKVQELADAVDQAEVVGGTGIAHTRWATHGEPSEINAHPHQSGDISVVHNGIIENHETLRELLQSRGYVFESQTDTEVIAHLVEWELRTAASLLEAVQKTVKQLEGAYGTVVLDRNDPSRIVVARSGSPIVIGFGVGENFLASDQLALLNVTRRFMYLEEGDVAEITRREVAVYDASGERVEREIAESNAEHDAGDKGQYRHFMQKEIYEQPTALINTMEGRITADSVVTEAIGVNAAEILSKVEHVQIVACGTSYNAGMTARYWFEDIAGVSCDVEIASEFRYRKFVTRPNSLLITLSQSGETADTLAALRLAKEKGYMAAMTICNVAGSSLVRESDFAFMTRAGVEIGVASTKAFTTQLAALLMLVTALGKQQGRISKEKEKEIVEALHALPKQINAALSFEKDIEALATDFADKHHTLFLGRGEFYPIAMEASLKLKEISYIHAEAYAAGELKHGPLALIDADMPVVVVAPSNDLLEKLKSNVEEVRARGGLLYVFADADAGFEGDETMKIITMPHVSEITAAIYYTIPMQLLSYYVALIKGTDVDQPRNLAKAVTVE.

The active-site Nucleophile; for GATase activity is the Cys2. The region spanning 2–218 (CGIVGAVAQR…EGDVAEITRR (217 aa)) is the Glutamine amidotransferase type-2 domain. SIS domains are found at residues 286-426 (AAEI…QQGR) and 459-600 (LATD…VDQP). Lys605 serves as the catalytic For Fru-6P isomerization activity.

Homodimer.

It is found in the cytoplasm. The catalysed reaction is D-fructose 6-phosphate + L-glutamine = D-glucosamine 6-phosphate + L-glutamate. Functionally, catalyzes the first step in hexosamine metabolism, converting fructose-6P into glucosamine-6P using glutamine as a nitrogen source. The sequence is that of Glutamine--fructose-6-phosphate aminotransferase [isomerizing] from Vibrio vulnificus (strain CMCP6).